Consider the following 82-residue polypeptide: Small ribosomal subunit protein uS17 (82 aa).

The protein belongs to the universal ribosomal protein uS17 family. In terms of assembly, part of the 30S ribosomal subunit.

In terms of biological role, one of the primary rRNA binding proteins, it binds specifically to the 5'-end of 16S ribosomal RNA. The polypeptide is Small ribosomal subunit protein uS17 (Aeromonas hydrophila subsp. hydrophila (strain ATCC 7966 / DSM 30187 / BCRC 13018 / CCUG 14551 / JCM 1027 / KCTC 2358 / NCIMB 9240 / NCTC 8049)).